A 1004-amino-acid polypeptide reads, in one-letter code: Putative helicase MOV-10 (1004 aa).

An N6-acetyllysine modification is found at Lys148. Thr254 carries the phosphothreonine modification. The residue at position 433 (Ser433) is a Phosphoserine. Residue 525 to 532 (GPPGTGKT) participates in ATP binding. Residues 646-649 (DEAG) carry the DEAG box motif. An interaction with AGO2 and APOBEC3G region spans residues 922–966 (NPLLLGHDPDWKTFLEFCKENGGYTGCPFPAKLDLQQGQDLLQGL). Positions 966–1004 (LSKLSPSTSGPRRHQNLPQEREGEGGLPLQVEPEWRNEL) are disordered. Residue Ser970 is modified to Phosphoserine.

Belongs to the DNA2/NAM7 helicase family. SDE3 subfamily. In terms of assembly, interacts with DICER1, AGO2, TARBP2, EIF6 and RPL7A (60S ribosome subunit); they form a large RNA-induced silencing complex (RISC). Interacts with APOBEC3G in an RNA-dependent manner. Interacts with TRIM71 (via NHL repeats) in an RNA-dependent manner. Interacts with both protein products of LIRE1, ORF1p and ORF2p. Interacts with TUT4 and, to a lesser extent, TUT7; the interactions are RNA-dependent. Interacts with AGO2, TNRC6B and UPF1; the interactions are direct and RNA-dependent. Interacts with FMR1; this interaction is direct, occurs in an RNA-dependent manner on polysomes and induces association of MOV10 with RNAs. Interacts with SHFL; the interaction increases in presence of RNA. Interacts with DHX34; the interaction is RNA-independent. Interacts with RBM46. Ubiquitinated by the DCX(DCAF12) complex that specifically recognizes the glutamate-leucine (Glu-Leu) degron at the C-terminus, leading to its degradation.

It is found in the cytoplasm. It localises to the P-body. Its subcellular location is the nucleus. The protein localises to the cytoplasmic ribonucleoprotein granule. The protein resides in the stress granule. It carries out the reaction ATP + H2O = ADP + phosphate + H(+). Its function is as follows. 5' to 3' RNA helicase that is involved in a number of cellular roles ranging from mRNA metabolism and translation, modulation of viral infectivity, inhibition of retrotransposition, or regulation of synaptic transmission. Plays an important role in innate antiviral immunity by promoting type I interferon production. Mechanistically, specifically uses IKKepsilon/IKBKE as the mediator kinase for IRF3 activation. Contributes to UPF1 mRNA target degradation by translocation along 3' UTRs. Required for microRNA (miRNA)-mediated gene silencing by the RNA-induced silencing complex (RISC). Required for both miRNA-mediated translational repression and miRNA-mediated cleavage of complementary mRNAs by RISC. In cooperation with FMR1, regulates miRNA-mediated translational repression by AGO2. Restricts retrotransposition of long interspersed element-1 (LINE-1) in cooperation with TUT4 and TUT7 counteracting the RNA chaperonne activity of L1RE1. Facilitates LINE-1 uridylation by TUT4 and TUT7. Required for embryonic viability and for normal central nervous system development and function. Plays two critical roles in early brain development: suppresses retroelements in the nucleus by directly inhibiting cDNA synthesis, while regulates cytoskeletal mRNAs to influence neurite outgrowth in the cytosol. May function as a messenger ribonucleoprotein (mRNP) clearance factor. The protein is Putative helicase MOV-10 (Mov10) of Mus musculus (Mouse).